The primary structure comprises 38 residues: Defensin-like peptide 3 (38 aa).

2 disulfide bridges follow: Cys-6-Cys-36 and Cys-13-Cys-29.

In terms of tissue distribution, produced by the crural gland and detected in venom from the spur located on each male hind leg.

It is found in the secreted. Does not show antimicrobial, myotoxic, hemolytic and cell-promoting activities. This chain is Defensin-like peptide 3, found in Ornithorhynchus anatinus (Duckbill platypus).